The following is a 638-amino-acid chain: 1-deoxy-D-xylulose-5-phosphate synthase (638 aa).

Thiamine diphosphate-binding positions include histidine 79 and 120–122 (AHS). Aspartate 151 contributes to the Mg(2+) binding site. Residues 152-153 (GA), asparagine 180, tyrosine 289, and glutamate 371 contribute to the thiamine diphosphate site. Asparagine 180 provides a ligand contact to Mg(2+).

This sequence belongs to the transketolase family. DXPS subfamily. Homodimer. Requires Mg(2+) as cofactor. Thiamine diphosphate is required as a cofactor.

It catalyses the reaction D-glyceraldehyde 3-phosphate + pyruvate + H(+) = 1-deoxy-D-xylulose 5-phosphate + CO2. Its pathway is metabolic intermediate biosynthesis; 1-deoxy-D-xylulose 5-phosphate biosynthesis; 1-deoxy-D-xylulose 5-phosphate from D-glyceraldehyde 3-phosphate and pyruvate: step 1/1. Its function is as follows. Catalyzes the acyloin condensation reaction between C atoms 2 and 3 of pyruvate and glyceraldehyde 3-phosphate to yield 1-deoxy-D-xylulose-5-phosphate (DXP). This Rhizobium etli (strain CIAT 652) protein is 1-deoxy-D-xylulose-5-phosphate synthase.